A 410-amino-acid polypeptide reads, in one-letter code: LL-diaminopimelate aminotransferase (410 aa).

The substrate site is built by tyrosine 15 and glycine 42. Pyridoxal 5'-phosphate-binding positions include tyrosine 72, alanine 108–lysine 109, tyrosine 132, asparagine 187, tyrosine 218, and serine 246–serine 248. Positions 109, 132, and 187 each coordinate substrate. Lysine 249 carries the post-translational modification N6-(pyridoxal phosphate)lysine. Pyridoxal 5'-phosphate-binding residues include arginine 257 and asparagine 292. 2 residues coordinate substrate: asparagine 292 and arginine 388.

The protein belongs to the class-I pyridoxal-phosphate-dependent aminotransferase family. LL-diaminopimelate aminotransferase subfamily. Homodimer. Pyridoxal 5'-phosphate is required as a cofactor.

It catalyses the reaction (2S,6S)-2,6-diaminopimelate + 2-oxoglutarate = (S)-2,3,4,5-tetrahydrodipicolinate + L-glutamate + H2O + H(+). The protein operates within amino-acid biosynthesis; L-lysine biosynthesis via DAP pathway; LL-2,6-diaminopimelate from (S)-tetrahydrodipicolinate (aminotransferase route): step 1/1. Its function is as follows. Involved in the synthesis of meso-diaminopimelate (m-DAP or DL-DAP), required for both lysine and peptidoglycan biosynthesis. Catalyzes the direct conversion of tetrahydrodipicolinate to LL-diaminopimelate. This chain is LL-diaminopimelate aminotransferase, found in Picosynechococcus sp. (strain ATCC 27264 / PCC 7002 / PR-6) (Agmenellum quadruplicatum).